Consider the following 463-residue polypeptide: uncharacterized protein (463 aa).

This is an uncharacterized protein from Lepidoptera (butterflies and moths).